Consider the following 685-residue polypeptide: Protein SPT2 homolog (685 aa).

An important for interaction with DNA region spans residues 1-570 (MDFREILMIA…PPLSGYRAAQ (570 aa)). A Glycyl lysine isopeptide (Lys-Gly) (interchain with G-Cter in SUMO2) cross-link involves residue Lys-37. A coiled-coil region spans residues 45-81 (QAFLKRKEEELRRKALEEKRRKEELVKKRIELKHDKK). Residues 79 to 168 (DKKARAMAKR…PLKSAPPPMN (90 aa)) form a disordered region. Basic and acidic residues predominate over residues 101–111 (IEEKSKKRQAT). Positions 123 to 148 (YEMEEENEFLEYNHAESEQEYEEEQE) form a coiled coil. Residue Lys-187 forms a Glycyl lysine isopeptide (Lys-Gly) (interchain with G-Cter in SUMO2) linkage. Basic and acidic residues-rich tracts occupy residues 188–209 (VVKK…EFLE) and 260–275 (HAEK…EKHL). Disordered regions lie at residues 188–615 (VVKK…QEEI) and 644–685 (SWKE…LKRR). Ser-278 bears the Phosphoserine mark. Composition is skewed to low complexity over residues 317–330 (SSTS…TSAS), 365–385 (SPGV…PSTG), and 402–415 (GSSS…ISGS). Polar residues predominate over residues 416-431 (KKPTNDSNPSRRTVSG). Over residues 435-501 (PGQPASSSGG…PGRSISGSIP (67 aa)) the composition is skewed to low complexity. Ser-471 is subject to Phosphoserine. The span at 519-529 (GPGQTVSSSGP) shows a compositional bias: polar residues. Residues 542-553 (ISSKNIISRSSN) show a composition bias toward low complexity. The important for interaction with histones stretch occupies residues 571–685 (GPQRLPFPTG…RRRAKKLKRR (115 aa)). Lys-582 is modified (N6-acetyllysine). Acidic residues predominate over residues 587 to 613 (YEEEDDDDDEYDSEMEDFIEDEGEPQE). Position 599 is a phosphoserine (Ser-599). Basic and acidic residues-rich tracts occupy residues 644–655 (SWKEQQKEEAKS) and 666–676 (EMRREEEEMQR). Positions 645–685 (WKEQQKEEAKSLRLGMQEDLEEMRREEEEMQRRRAKKLKRR) form a coiled coil.

Belongs to the SPT2 family. In terms of assembly, interacts with histones. Interacts with a heterotetrameric complex formed by histone H3 and H4, especially when the histone tetramer is not bound to DNA. Interacts with histone H3.3.

It localises to the nucleus. It is found in the nucleolus. Histone chaperone that stabilizes pre-existing histone tetramers and regulates replication-independent histone exchange on chromatin. Required for normal chromatin refolding in the coding region of transcribed genes, and for the suppression of spurious transcription. Binds DNA and histones and promotes nucleosome assembly (in vitro). Facilitates formation of tetrameric histone complexes containing histone H3 and H4. Modulates RNA polymerase 1-mediated transcription. Binds DNA, with a preference for branched DNA species, such as Y-form DNA and Holliday junction DNA. This Homo sapiens (Human) protein is Protein SPT2 homolog (SPTY2D1).